A 530-amino-acid chain; its full sequence is MEIKNSPSSLTSPASYNCSQSILPLEHGPIYIPSSYVESRHEYSAMTFYSPAVMNYSVPSSTGNLEGGPVRQTASPNVLWPTSGHLSPLATHCQSSLLYAEPQKSPWCEARSLEHTLPVNRETLKRKLGGSGCASPVTSPSAKRDAHFCAVCSDYASGYHYGVWSCEGCKAFFKRSIQGHNDYICPATNQCTIDKNRRKSCQACRLRKCYEVGMVKCGSRRERCGYRIVRRQRSASEQVHCLNKAKRTSGHTPRVKELLLNSLSPEQLVLTLLEAEPPNVLVSRPSMPFTEASMMMSLTKLADKELVHMIGWAKKIPGFVELSLLDQVRLLESCWMEVLMVGLMWRSIDHPGKLIFAPDLVLDRDEGKCVEGILEIFDMLLATTARFRELKLQHKEYLCVKAMILLNSSMYPLATASQEAESSRKLTHLLNAVTDALVWVISKSGISSQQQSVRLANLLMLLSHVRHISNKGMEHLLSMKCKNVVPVYDLLLEMLNAHTLRGYKSSISGSECCSTEDSKSKEGSQNLQSQ.

Residues 1–148 (MEIKNSPSSL…SPSAKRDAHF (148 aa)) are modulating. Ser-61 carries the post-translational modification Phosphoserine; alternate. Ser-61 is a glycosylation site (O-linked (GlcNAc) serine; alternate). A phosphoserine; by MAPK mark is found at Ser-87 and Ser-105. 2 consecutive NR C4-type zinc fingers follow at residues 149–169 (CAVC…CEGC) and 185–209 (CPAT…LRKC). Positions 149-214 (CAVCSDYASG…RLRKCYEVGM (66 aa)) form a DNA-binding region, nuclear receptor. The NR LBD domain occupies 264-498 (SPEQLVLTLL…DLLLEMLNAH (235 aa)). Residues 506-515 (SISGSECCST) are compositionally biased toward polar residues. Residues 506-530 (SISGSECCSTEDSKSKEGSQNLQSQ) form a disordered region.

The protein belongs to the nuclear hormone receptor family. NR3 subfamily. In terms of assembly, binds DNA as a homodimer. Can form a heterodimer with ESR1. Interacts with NCOA1, NCOA3, NCOA5 and NCOA6 coactivators, leading to a strong increase of transcription of target genes. Interacts with UBE1C and AKAP13. Interacts with DNTTIP2. Interacts with CCDC62 in the presence of estradiol/E2; this interaction seems to enhance the transcription of target genes. Interacts with DNAAF4. Interacts with PRMT2. Interacts with CCAR2 (via N-terminus) in a ligand-independent manner. Interacts with RBM39, in the presence of estradiol (E2). Interacts with STUB1/CHIP. Phosphorylation at Ser-87 and Ser-105 recruits NCOA1. As to expression, expressed in prostate, ovary, Leydig cells and in epithelium of the efferent ductules and of the initial segment of the epididymis.

It is found in the nucleus. In terms of biological role, nuclear hormone receptor. Binds estrogens with an affinity similar to that of ESR1/ER-alpha, and activates expression of reporter genes containing estrogen response elements (ERE) in an estrogen-dependent manner. The chain is Estrogen receptor beta (Esr2) from Mus musculus (Mouse).